Here is a 388-residue protein sequence, read N- to C-terminus: bZIP transcription factor ABI5 homolog (388 aa).

The disordered stretch occupies residues 1–36 (MASEMSKNVKVTDDQEVTSQERDQSGGTKVGGEEEI). A Phosphoserine modification is found at serine 44. A bZIP domain is found at 302 to 365 (VERRQRRMIK…KQMLVEKMME (64 aa)). Residues 304 to 323 (RRQRRMIKNRESAARSRARK) form a basic motif region. Residues 330–344 (LEAELNYLKQENARL) form a leucine-zipper region. Residues 368–388 (KEKMNANRGGSQLRRSGSCMW) are disordered.

Belongs to the bZIP family. ABI5 subfamily. Forms homodimers. Interacts with VP1. Interacts with GF14D. Interacts with PP2C51. Interacts with SAPK2. Post-translationally, phosphorylated at Ser-44 by SAPK6. Expressed in roots, leaves and panicles. Expressed in seeds.

The protein resides in the nucleus. Functionally, transcription factor that possesses transactivation activity in yeast. Involved in abscisic acid (ABA) signaling pathway. Binds to the G-box motif 5'-CACGTG-3' of TRAB1 gene promoter. Involved in the regulation of pollen maturation. May act as negative regulator of salt stress response. Together with PYL5, PP2C30 and SAPK2, is part of an ABA signaling unit that modulates seed germination and early seedling growth. The polypeptide is bZIP transcription factor ABI5 homolog (Oryza sativa subsp. japonica (Rice)).